A 70-amino-acid chain; its full sequence is DNA gyrase inhibitor YacG (70 aa).

Zn(2+) is bound by residues C9, C12, C28, and C32. Residues 43-70 (ESRKIPGSSIDPESIVTSNNKQDNVDEQ) are disordered.

Belongs to the DNA gyrase inhibitor YacG family. Interacts with GyrB. The cofactor is Zn(2+).

In terms of biological role, inhibits all the catalytic activities of DNA gyrase by preventing its interaction with DNA. Acts by binding directly to the C-terminal domain of GyrB, which probably disrupts DNA binding by the gyrase. This Legionella pneumophila (strain Lens) protein is DNA gyrase inhibitor YacG.